The chain runs to 299 residues: Taste receptor type 2 member 50 (299 aa).

A topological domain (extracellular) is located at residue methionine 1. A helical transmembrane segment spans residues 2–22 (VTFLHIFFSILILVLFVLGNF). At 23–55 (ANGFIALVNFIDLVKRKKISSADQILTALAVSR) the chain is on the cytoplasmic side. A helical membrane pass occupies residues 56 to 76 (IGLLWALLLNWYLTVLNPAFY). Residues 77–87 (SVELRITSYNA) lie on the Extracellular side of the membrane. The chain crosses the membrane as a helical span at residues 88–108 (WVVTNHFSMWLAASLSIFYLL). The Cytoplasmic portion of the chain corresponds to 109 to 126 (KIANFSNLIFLHLKRRVR). The helical transmembrane segment at 127–147 (SVILVILLGPLTFLVCHLFVA) threads the bilayer. Residues 148-181 (NMDESMSAEEYEGNMTGKLKLRNTVHLSYLTVTT) are Extracellular-facing. Residue asparagine 161 is glycosylated (N-linked (GlcNAc...) asparagine). A helical transmembrane segment spans residues 182–202 (LWSFIPFTLSLISFLMLICSL). The Cytoplasmic portion of the chain corresponds to 203–229 (CKHVKKMQLHGEGSQDLSTKVHIKALQ). A helical transmembrane segment spans residues 230–250 (TLISFLLLCAIFFLFLIISIW). Topologically, residues 251–259 (NPRRLQNDP) are extracellular. A helical membrane pass occupies residues 260–280 (VVVVSKAVGNIYLALDSFILI). The Cytoplasmic segment spans residues 281–299 (WRTKKLKHTFLLILCQIRC).

The protein belongs to the G-protein coupled receptor T2R family.

The protein localises to the membrane. Its function is as follows. Receptor that may play a role in the perception of bitterness and is gustducin-linked. May play a role in sensing the chemical composition of the gastrointestinal content. The activity of this receptor may stimulate alpha gustducin, mediate PLC-beta-2 activation and lead to the gating of TRPM5. This Pongo pygmaeus (Bornean orangutan) protein is Taste receptor type 2 member 50 (TAS2R50).